A 115-amino-acid polypeptide reads, in one-letter code: MAEITSAKATAKTVRVSPRKTRLVIDLIRGKRVADAIAILKFTPTKAAVEVENVLNSAIANAENNFGLEKANLVVSETFINEGPTMKRFRPRAKGSASPINKRTAHITVVVAEKE.

This sequence belongs to the universal ribosomal protein uL22 family. Part of the 50S ribosomal subunit.

This protein binds specifically to 23S rRNA; its binding is stimulated by other ribosomal proteins, e.g. L4, L17, and L20. It is important during the early stages of 50S assembly. It makes multiple contacts with different domains of the 23S rRNA in the assembled 50S subunit and ribosome. Its function is as follows. The globular domain of the protein is located near the polypeptide exit tunnel on the outside of the subunit, while an extended beta-hairpin is found that lines the wall of the exit tunnel in the center of the 70S ribosome. In Lactococcus lactis subsp. lactis (strain IL1403) (Streptococcus lactis), this protein is Large ribosomal subunit protein uL22.